We begin with the raw amino-acid sequence, 93 residues long: Small ribosomal subunit protein uS19 (93 aa).

It belongs to the universal ribosomal protein uS19 family.

In terms of biological role, protein S19 forms a complex with S13 that binds strongly to the 16S ribosomal RNA. The polypeptide is Small ribosomal subunit protein uS19 (Cutibacterium acnes (strain DSM 16379 / KPA171202) (Propionibacterium acnes)).